A 181-amino-acid polypeptide reads, in one-letter code: ATP synthase subunit b, chloroplastic (181 aa).

A helical membrane pass occupies residues 27 to 49 (LATNPINLSVVLGVVIYFGKGVL).

This sequence belongs to the ATPase B chain family. As to quaternary structure, F-type ATPases have 2 components, F(1) - the catalytic core - and F(0) - the membrane proton channel. F(1) has five subunits: alpha(3), beta(3), gamma(1), delta(1), epsilon(1). F(0) has four main subunits: a(1), b(1), b'(1) and c(10-14). The alpha and beta chains form an alternating ring which encloses part of the gamma chain. F(1) is attached to F(0) by a central stalk formed by the gamma and epsilon chains, while a peripheral stalk is formed by the delta, b and b' chains.

The protein resides in the plastid. It localises to the chloroplast thylakoid membrane. Its function is as follows. F(1)F(0) ATP synthase produces ATP from ADP in the presence of a proton or sodium gradient. F-type ATPases consist of two structural domains, F(1) containing the extramembraneous catalytic core and F(0) containing the membrane proton channel, linked together by a central stalk and a peripheral stalk. During catalysis, ATP synthesis in the catalytic domain of F(1) is coupled via a rotary mechanism of the central stalk subunits to proton translocation. In terms of biological role, component of the F(0) channel, it forms part of the peripheral stalk, linking F(1) to F(0). The chain is ATP synthase subunit b, chloroplastic from Lemna minor (Common duckweed).